The chain runs to 171 residues: Protein FAM209A (171 aa).

A signal peptide spans 1-19; it reads MWTLKSSLVLLLCLTCSYA. At 20–52 the chain is on the extracellular side; the sequence is FMFSSLRQKTSEPQGKVQYGEHFRIRQNLPEHT. A helical transmembrane segment spans residues 53–73; the sequence is QGWLGSKWLWLLFVVVPFVIL. Over 74-171 the chain is Cytoplasmic; that stretch reads QCQRDSEKNK…CEIWGEESSS (98 aa). The segment at 81 to 107 is disordered; that stretch reads KNKEQSPPGLRGGQLHSPLKKKRNASP. A coiled-coil region spans residues 114-139; it reads NTLMELEVELMKFVSKVRNLKRAMAT.

The protein belongs to the FAM209 family. In terms of assembly, interacts with DPY19L2. Interacts with CYLC1; the interaction may be relevant for proper acrosome attachment to the nuclear envelope.

It localises to the nucleus inner membrane. Functionally, may play a role in sperm acrosome biogenesis. The chain is Protein FAM209A from Homo sapiens (Human).